The chain runs to 335 residues: Mycobacterial beta-ketoacyl-[acyl-carrier-protein] synthase III (335 aa).

Catalysis depends on residues Cys-122 and His-258. Residues 259–263 are ACP-binding; the sequence is QANSR. Asn-289 is an active-site residue.

Belongs to the thiolase-like superfamily. FabH family. Homodimer.

The protein localises to the cytoplasm. The enzyme catalyses malonyl-[ACP] + dodecanoyl-CoA + H(+) = 3-oxotetradecanoyl-[ACP] + CO2 + CoA. The protein operates within lipid metabolism; fatty acid biosynthesis. It participates in lipid metabolism; mycolic acid biosynthesis. Catalyzes the condensation reaction of fatty acid synthesis by the addition to an acyl acceptor of two carbons from malonyl-ACP. Catalyzes the first condensation reaction which initiates fatty acid synthesis and may therefore play a role in governing the total rate of fatty acid production. Possesses both acetoacetyl-ACP synthase and acetyl transacylase activities. Its substrate specificity determines the biosynthesis of branched-chain and/or straight-chain of fatty acids. In Mycolicibacterium paratuberculosis (strain ATCC BAA-968 / K-10) (Mycobacterium paratuberculosis), this protein is Mycobacterial beta-ketoacyl-[acyl-carrier-protein] synthase III.